The sequence spans 210 residues: Amelogenin, X isoform (210 aa).

Positions 1 to 16 (MGTWILFACLLGAAFA) are cleaved as a signal peptide. Ser-32 bears the Phosphoserine mark. Composition is skewed to low complexity over residues 109-119 (VAPQQPMMPVP) and 136-169 (PSAQ…HPMQ). Positions 109–187 (VAPQQPMMPV…PPLFSMQPLS (79 aa)) are disordered. Over residues 170-179 (PLAPQPPLPP) the composition is skewed to pro residues.

It belongs to the amelogenin family. As to quaternary structure, interacts with KRT5. Post-translationally, several forms are produced by C-terminal processing. In terms of processing, phosphorylated by FAM20C in vitro.

It localises to the secreted. The protein resides in the extracellular space. It is found in the extracellular matrix. Plays a role in the biomineralization of teeth. Seems to regulate the formation of crystallites during the secretory stage of tooth enamel development. Thought to play a major role in the structural organization and mineralization of developing enamel. The sequence is that of Amelogenin, X isoform (Amelx) from Mus musculus (Mouse).